The following is a 317-amino-acid chain: MKFLQSFPVILAVFSFAANLVSSKLVYEYETKYVTVEIVTIVSGETTYTTERLETNGPTSTTTTIVIPSSKPSSPESKPKSDSQPMFQSPSPVQITPSTTSINNAPSPTKPETTVTASPAVIAHTSVFVVTPNSAPTTSSSPPNIVQQVKAAITPSAPKPQPQPQPQENNSGTNDDSQLSSFSRQILEAHNIKRASHGVNPLTWSNELYNYANKVASSYDCSGNLRHTSGPYGENLALGYSSGANAVSAWYSEGFNFGGAGKLNHFTQVVWKSTTQLGCAYKDCRAKGWGLYIICNYQKPGNIIGQELANILPLIRS.

An N-terminal signal peptide occupies residues 1–23; that stretch reads MKFLQSFPVILAVFSFAANLVSS. 2 disordered regions span residues 52–116 and 155–179; these read RLET…TTVT and PSAPKPQPQPQPQENNSGTNDDSQL. Positions 58–76 are enriched in low complexity; sequence PTSTTTTIVIPSSKPSSPE. 2 stretches are compositionally biased toward polar residues: residues 84-116 and 168-179; these read QPMFQSPSPVQITPSTTSINNAPSPTKPETTVT and ENNSGTNDDSQL. An N-linked (GlcNAc...) asparagine glycan is attached at Asn169. The 111-residue stretch at 187-297 folds into the SCP domain; the sequence is LEAHNIKRAS…GWGLYIICNY (111 aa).

This sequence belongs to the CRISP family.

The protein resides in the secreted. Its function is as follows. Secreted protein that acts as a virulence factor during infections. The polypeptide is Probable pathogenesis-related protein CaO19.6200 (Candida albicans (strain SC5314 / ATCC MYA-2876) (Yeast)).